A 69-amino-acid polypeptide reads, in one-letter code: DLITNSYTRGKPRHVTSWRNLKTRDVCDSLVEGRCIHNGCYCDRSAPHGNCCHTDGCTVAFWCPGTKWD.

Positions 1–23 (DLITNSYTRGKPRHVTSWRNLKT) are excised as a propeptide.

Contains 4 disulfide bonds. In terms of tissue distribution, expressed by the venom duct.

The protein resides in the secreted. The polypeptide is Conotoxin Cal12.1p5 (Californiconus californicus (California cone)).